A 429-amino-acid chain; its full sequence is Keratin, type I cytoskeletal 20 (429 aa).

Residues 1–26 (MDFSRRSFHRSLSSSSQGPALSTSGS) are disordered. Positions 1–74 (MDFSRRSFHR…SNGGDLFGGN (74 aa)) are head. Residues 10-26 (RSLSSSSQGPALSTSGS) are compositionally biased toward low complexity. A phosphoserine mark is found at Ser-13, Ser-16, and Ser-26. Positions 75-110 (EKLAMQNLNDRLASYLEKVRSLEQSNSKLEAQIKQW) are coil 1A. The IF rod domain maps to 75–386 (EKLAMQNLND…RLLEGEDIKT (312 aa)). A linker 1 region spans residues 111 to 128 (YETNAPSTIRDYSSYYAQ). The tract at residues 129-220 (IKELQDQIKD…KEHQEEVEVL (92 aa)) is coil 1B. The linker 12 stretch occupies residues 221 to 243 (RRQLGNNVNVEVDAAPGLNLGEI). Positions 244–382 (MNEMRQKYEI…ATYRRLLEGE (139 aa)) are coil 2. A tail region spans residues 383–429 (DIKTTEYQLNTLEAKDIKKTRKIKTVVEEVVDGKVVSSEVKEIEENI).

The protein belongs to the intermediate filament family. Heterotetramer of two type I and two type II keratins. Associates with KRT8. Hyperphosphorylation at Ser-13 occurs during the early stages of apoptosis but becomes less prominent during the later stages. Phosphorylation at Ser-13 also increases in response to stress brought on by cell injury. Post-translationally, proteolytically cleaved by caspases during apoptosis. Cleavage occurs at Asp-233. As to expression, expressed predominantly in the intestinal epithelium in differentiated villus cells.

Functionally, plays a significant role in maintaining keratin filament organization in intestinal epithelia. When phosphorylated, plays a role in the secretion of mucin in the small intestine. The sequence is that of Keratin, type I cytoskeletal 20 (Krt20) from Rattus norvegicus (Rat).